Here is a 1188-residue protein sequence, read N- to C-terminus: DNA-directed RNA polymerase subunit beta (1188 aa).

Belongs to the RNA polymerase beta chain family. In terms of assembly, the RNAP catalytic core consists of 2 alpha, 1 beta, 1 beta' and 1 omega subunit. When a sigma factor is associated with the core the holoenzyme is formed, which can initiate transcription.

The catalysed reaction is RNA(n) + a ribonucleoside 5'-triphosphate = RNA(n+1) + diphosphate. Functionally, DNA-dependent RNA polymerase catalyzes the transcription of DNA into RNA using the four ribonucleoside triphosphates as substrates. The sequence is that of DNA-directed RNA polymerase subunit beta from Streptococcus pyogenes serotype M1.